The sequence spans 513 residues: GMP synthase [glutamine-hydrolyzing] (513 aa).

A Glutamine amidotransferase type-1 domain is found at 9 to 198 (LILVLDFGSQ…VRRVCDCKGQ (190 aa)). Cys-86 serves as the catalytic Nucleophile. Catalysis depends on residues His-172 and Glu-174. The GMPS ATP-PPase domain occupies 199 to 388 (WTMENFIEIE…LGIPEHLVWR (190 aa)). 226 to 232 (SGGVDSS) lines the ATP pocket.

In terms of assembly, homodimer.

It catalyses the reaction XMP + L-glutamine + ATP + H2O = GMP + L-glutamate + AMP + diphosphate + 2 H(+). It functions in the pathway purine metabolism; GMP biosynthesis; GMP from XMP (L-Gln route): step 1/1. Catalyzes the synthesis of GMP from XMP. In Staphylococcus aureus (strain Mu3 / ATCC 700698), this protein is GMP synthase [glutamine-hydrolyzing].